The chain runs to 212 residues: Protein-L-isoaspartate O-methyltransferase (212 aa).

S60 is a catalytic residue.

Belongs to the methyltransferase superfamily. L-isoaspartyl/D-aspartyl protein methyltransferase family.

It is found in the cytoplasm. The catalysed reaction is [protein]-L-isoaspartate + S-adenosyl-L-methionine = [protein]-L-isoaspartate alpha-methyl ester + S-adenosyl-L-homocysteine. Its function is as follows. Catalyzes the methyl esterification of L-isoaspartyl residues in peptides and proteins that result from spontaneous decomposition of normal L-aspartyl and L-asparaginyl residues. It plays a role in the repair and/or degradation of damaged proteins. The protein is Protein-L-isoaspartate O-methyltransferase of Methanococcus maripaludis (strain C7 / ATCC BAA-1331).